A 118-amino-acid chain; its full sequence is DNA-binding protein inhibitor ID-3 (118 aa).

The region spanning 32 to 84 (SHKGPGVDEPMGLLYDMNGCYSKLKELVPGIPQGSKLSQVEILQHVIDYIFDL) is the bHLH domain.

In terms of assembly, homodimer. Heterodimer with other HLH proteins. Interacts (via HLH domain) with the bHLH protein hes4/hairy2 (via Orange domain). Interacts with stat3.

Its subcellular location is the nucleus. In terms of biological role, transcriptional regulator (lacking a basic DNA binding domain) which negatively regulates the basic helix-loop-helix (bHLH) transcription factors by forming heterodimers and inhibiting their DNA binding and transcriptional activity. Influences cell fate decisions in the embryo by sequestering and blocking the activity of the bHLH transcription factors that control these decisions. Inhibits the binding of myogenic bHLH-containing complexes to E-box DNA, thereby preventing activation of muscle-specific target genes. Also inhibits the activity of neurogenic factor neurod1/neuroD. Plays a role in cell cycle progression and survival of neural crest progenitors; binding to either hes4-B/hairy2b or stat3 blocks the formation of transcription factor complexes and the repressor function of hes4-B/hairy2B, to allow neural crest progenitors to differentiate. May play a role in the regulation of the circadian rhythm. The protein is DNA-binding protein inhibitor ID-3 (id3) of Xenopus tropicalis (Western clawed frog).